The sequence spans 1258 residues: Cohesin subunit SA-1 (1258 aa).

Positions 1–84 (MITSELPVLQ…HPQQNGEGEP (84 aa)) are disordered. Positions 10–19 (QDSTNETTAH) are enriched in polar residues. Ser24 is modified (phosphoserine). A compositionally biased stretch (basic and acidic residues) spans 53–62 (SPGEKSRIEA). Positions 296-381 (FVHRYRDAIA…NRFKDRIVSM (86 aa)) constitute an SCD domain. Residues Ser756, Ser1062, and Ser1065 each carry the phosphoserine modification. Disordered stretches follow at residues 1055–1096 (GGED…SLDN) and 1129–1148 (MGDQ…DFLH). Residues 1062-1074 (SVNSGSSSSKTSS) show a composition bias toward low complexity. The span at 1076–1087 (RNKKGRPPLHKK) shows a compositional bias: basic residues. Residue Ser1093 is modified to Phosphoserine. The span at 1137 to 1146 (ESEHGSEPDF) shows a compositional bias: basic and acidic residues. Lys1161 is covalently cross-linked (Glycyl lysine isopeptide (Lys-Gly) (interchain with G-Cter in SUMO2)).

It belongs to the SCC3 family. In terms of assembly, cohesin complexes are composed of a heterodimer between a SMC1 protein (SMC1A or SMC1B) and SMC3, which are attached via their hinge domain, and RAD21 which link them at their heads, and one STAG protein (STAG1, STAG2 or STAG3). In cohesin complexes, STAG1 is mutually exclusive with STAG2 and STAG3. Interacts directly with RAD21 in cohesin complex. The cohesin complex interacts with the cohesin loading complex subunits NIPBL/Scc2 (via HEAT repeats) and MAU2/Scc4. NIPBL directly contacts all members of the complex, RAD21, SMC1A/B, SMC3 and STAG1. Phosphorylated by PLK1. The large dissociation of cohesin from chromosome arms during prophase is partly due to its phosphorylation.

The protein localises to the nucleus. It localises to the chromosome. Its subcellular location is the centromere. Its function is as follows. Component of cohesin complex, a complex required for the cohesion of sister chromatids after DNA replication. The cohesin complex apparently forms a large proteinaceous ring within which sister chromatids can be trapped. At anaphase, the complex is cleaved and dissociates from chromatin, allowing sister chromatids to segregate. The cohesin complex may also play a role in spindle pole assembly during mitosis. This Homo sapiens (Human) protein is Cohesin subunit SA-1 (STAG1).